A 149-amino-acid polypeptide reads, in one-letter code: Oligosaccharyltransferase complex subunit OSTC (149 aa).

Topologically, residues 1–32 (METLYRVPFLVLECPNLKLKKPPWLHMPSAMT) are cytoplasmic. A helical membrane pass occupies residues 33-53 (VYALVVVSYFLITGGIIYDVI). At 54–83 (VEPPSVGSMTDEHGHQRPVAFLAYRVNGQY) the chain is on the extracellular side. Residues 84–104 (IMEGLASSFLFTMGGLGFIIL) traverse the membrane as a helical segment. Residues 105–117 (DRSNAPNIPKLNR) lie on the Cytoplasmic side of the membrane. A helical transmembrane segment spans residues 118-138 (FLLLFIGFVCVLLSFFMARVF). Residues 139-149 (MRMKLPGYLMG) are Extracellular-facing.

Belongs to the OSTC family. As to quaternary structure, component of STT3A-containing oligosaccharyl transferase (OST-A) complex. STT3A-containing complex assembly occurs through the formation of 3 subcomplexes. Subcomplex 1 contains RPN1 and TMEM258, subcomplex 2 contains the STT3A-specific subunits STT3A, DC2/OSTC, and KCP2 as well as the core subunit OST4, and subcomplex 3 contains RPN2, DAD1, and OST48. The OST-A complex can form stable complexes with the Sec61 complex or with both the Sec61 and TRAP complexes. Interacts with PSEN1 and NCSTN; indicative for an association with the gamma-secretase complex.

It localises to the endoplasmic reticulum. Its subcellular location is the membrane. It functions in the pathway protein modification; protein glycosylation. In terms of biological role, subunit of STT3A-containing oligosaccharyl transferase (OST-A) complex that catalyzes the initial transfer of a defined glycan (Glc(3)Man(9)GlcNAc(2) in eukaryotes) from the lipid carrier dolichol-pyrophosphate to an asparagine residue within an Asn-X-Ser/Thr consensus motif in nascent polypeptide chains, the first step in protein N-glycosylation. N-glycosylation occurs cotranslationally and the complex associates with the Sec61 complex at the channel-forming translocon complex that mediates protein translocation across the endoplasmic reticulum (ER). Within the OST-A complex, acts as an adapter that anchors the OST-A complex to the Sec61 complex. May be involved in N-glycosylation of APP (amyloid-beta precursor protein). Can modulate gamma-secretase cleavage of APP by enhancing endoprotelysis of PSEN1. The polypeptide is Oligosaccharyltransferase complex subunit OSTC (Homo sapiens (Human)).